The following is a 351-amino-acid chain: MEIHEHIIELPKKVYVGNGILSKLRDYLFQLNVLEPVLVVTGPNVRKIVIDEVAKGLNEIGKIEFIEVLDSSIDEVNRVEEKAKQLNPKFVLGIGGGKTIDVAKYVAYKLNVNFISIPTAPSHDGITSPFASIKGLGKPVSVKAKMPYAIIADINVLSSAPRRLINSGIGDTIGKLVAVRDWKLASKLTGEYYGDYTASLALLSAKHALSCTRIIHRDLKYSVSLLTEALISSGVAMGMAGSTRPASGSEHLFAHAVDLLQPNAALHGELVGMGSIIMAYIHGINWREIRNALDRIGAPTTAKQLGIPNDVIIKALTIAHTIRPERYTILGDRGLTWASAEKVARDTGVIE.

Residues 97–101 (GKTID) and 119–122 (TAPS) each bind NAD(+). Asp-124 lines the substrate pocket. Residue Ser-128 coordinates NAD(+). A substrate-binding site is contributed by Asp-171. Residues Asp-171 and His-251 each coordinate Zn(2+). His-255 is a binding site for substrate. His-267 contacts Zn(2+).

This sequence belongs to the glycerol-1-phosphate dehydrogenase family. As to quaternary structure, homodimer. Zn(2+) serves as cofactor.

It is found in the cytoplasm. The catalysed reaction is sn-glycerol 1-phosphate + NAD(+) = dihydroxyacetone phosphate + NADH + H(+). It carries out the reaction sn-glycerol 1-phosphate + NADP(+) = dihydroxyacetone phosphate + NADPH + H(+). It functions in the pathway membrane lipid metabolism; glycerophospholipid metabolism. In terms of biological role, catalyzes the NAD(P)H-dependent reduction of dihydroxyacetonephosphate (DHAP or glycerone phosphate) to glycerol 1-phosphate (G1P). The G1P thus generated is used as the glycerophosphate backbone of phospholipids in the cellular membranes of Archaea. This is Glycerol-1-phosphate dehydrogenase [NAD(P)+] from Metallosphaera sedula (strain ATCC 51363 / DSM 5348 / JCM 9185 / NBRC 15509 / TH2).